The primary structure comprises 119 residues: Large ribosomal subunit protein bL20 (119 aa).

It belongs to the bacterial ribosomal protein bL20 family.

Its function is as follows. Binds directly to 23S ribosomal RNA and is necessary for the in vitro assembly process of the 50S ribosomal subunit. It is not involved in the protein synthesizing functions of that subunit. The polypeptide is Large ribosomal subunit protein bL20 (Bradyrhizobium sp. (strain BTAi1 / ATCC BAA-1182)).